Reading from the N-terminus, the 277-residue chain is NH(3)-dependent NAD(+) synthetase (277 aa).

36–43 (GLSGGIDS) provides a ligand contact to ATP. Asp-42 lines the Mg(2+) pocket. Arg-118 serves as a coordination point for deamido-NAD(+). Thr-138 serves as a coordination point for ATP. Glu-143 contacts Mg(2+). ATP is bound by residues Lys-167 and Ser-189.

Belongs to the NAD synthetase family. In terms of assembly, homodimer.

The enzyme catalyses deamido-NAD(+) + NH4(+) + ATP = AMP + diphosphate + NAD(+) + H(+). The protein operates within cofactor biosynthesis; NAD(+) biosynthesis; NAD(+) from deamido-NAD(+) (ammonia route): step 1/1. In terms of biological role, catalyzes the ATP-dependent amidation of deamido-NAD to form NAD. Uses ammonia as a nitrogen source. The sequence is that of NH(3)-dependent NAD(+) synthetase from Chlorobium phaeovibrioides (strain DSM 265 / 1930) (Prosthecochloris vibrioformis (strain DSM 265)).